The chain runs to 89 residues: Small ribosomal subunit protein uS15 (89 aa).

Belongs to the universal ribosomal protein uS15 family. In terms of assembly, part of the 30S ribosomal subunit. Forms a bridge to the 50S subunit in the 70S ribosome, contacting the 23S rRNA.

One of the primary rRNA binding proteins, it binds directly to 16S rRNA where it helps nucleate assembly of the platform of the 30S subunit by binding and bridging several RNA helices of the 16S rRNA. In terms of biological role, forms an intersubunit bridge (bridge B4) with the 23S rRNA of the 50S subunit in the ribosome. The protein is Small ribosomal subunit protein uS15 of Lacticaseibacillus casei (strain BL23) (Lactobacillus casei).